We begin with the raw amino-acid sequence, 404 residues long: Serine/threonine transporter SstT (404 aa).

8 helical membrane passes run 17 to 37 (IGIGVVIGVMLGILAPDLTGF), 39 to 59 (ILGKLFVGGLKAIAPLLVFAL), 75 to 95 (MTLIIVLYLFGTFASALVAVL), 138 to 158 (ALATANYIGVLSWAIIFGLAL), 179 to 199 (IVVWIINLAPIGIMSLVFTTI), 212 to 232 (FLILVLVGTMVFVALVVNPLI), 287 to 307 (IPLGATINMGGAAITINVLTL), and 313 to 333 (FGIPIDFLTALLLSVVAAVSA).

This sequence belongs to the dicarboxylate/amino acid:cation symporter (DAACS) (TC 2.A.23) family.

It localises to the cell membrane. It catalyses the reaction L-serine(in) + Na(+)(in) = L-serine(out) + Na(+)(out). The catalysed reaction is L-threonine(in) + Na(+)(in) = L-threonine(out) + Na(+)(out). Its function is as follows. Involved in the import of serine and threonine into the cell, with the concomitant import of sodium (symport system). The chain is Serine/threonine transporter SstT from Streptococcus pyogenes serotype M12 (strain MGAS2096).